The chain runs to 185 residues: Histone H1-delta (185 aa).

2 disordered regions span residues 1 to 37 (MADT…PKYS) and 90 to 185 (RHVK…GKKK). Residues 32-105 (SHPKYSDMIA…GASGSFLLAE (74 aa)) enclose the H15 domain. Over residues 109-185 (TPKKAAAKKA…KAAKGKGKKK (77 aa)) the composition is skewed to basic residues.

It belongs to the histone H1/H5 family.

The protein localises to the nucleus. It is found in the chromosome. Functionally, histones H1 are necessary for the condensation of nucleosome chains into higher-order structures. The polypeptide is Histone H1-delta (Strongylocentrotus purpuratus (Purple sea urchin)).